The following is a 31-amino-acid chain: MFTAISYLGILVGALLFVTITFLTLRTIQLL.

The helical transmembrane segment at 5–25 threads the bilayer; sequence ISYLGILVGALLFVTITFLTL.

This sequence belongs to the PetL family. In terms of assembly, the 4 large subunits of the cytochrome b6-f complex are cytochrome b6, subunit IV (17 kDa polypeptide, PetD), cytochrome f and the Rieske protein, while the 4 small subunits are PetG, PetL, PetM and PetN. The complex functions as a dimer.

It localises to the plastid. Its subcellular location is the chloroplast thylakoid membrane. In terms of biological role, component of the cytochrome b6-f complex, which mediates electron transfer between photosystem II (PSII) and photosystem I (PSI), cyclic electron flow around PSI, and state transitions. PetL is important for photoautotrophic growth as well as for electron transfer efficiency and stability of the cytochrome b6-f complex. This Chlorokybus atmophyticus (Soil alga) protein is Cytochrome b6-f complex subunit 6.